A 196-amino-acid polypeptide reads, in one-letter code: dTTP/UTP pyrophosphatase (196 aa).

Residue D76 is the Proton acceptor of the active site.

The protein belongs to the Maf family. YhdE subfamily. Requires a divalent metal cation as cofactor.

Its subcellular location is the cytoplasm. The enzyme catalyses dTTP + H2O = dTMP + diphosphate + H(+). The catalysed reaction is UTP + H2O = UMP + diphosphate + H(+). Nucleoside triphosphate pyrophosphatase that hydrolyzes dTTP and UTP. May have a dual role in cell division arrest and in preventing the incorporation of modified nucleotides into cellular nucleic acids. This Chlorobium chlorochromatii (strain CaD3) protein is dTTP/UTP pyrophosphatase.